Here is a 185-residue protein sequence, read N- to C-terminus: Ribosome-recycling factor (185 aa).

It belongs to the RRF family.

It is found in the cytoplasm. Its function is as follows. Responsible for the release of ribosomes from messenger RNA at the termination of protein biosynthesis. May increase the efficiency of translation by recycling ribosomes from one round of translation to another. The protein is Ribosome-recycling factor of Wigglesworthia glossinidia brevipalpis.